We begin with the raw amino-acid sequence, 428 residues long: MRYTKSEEAMKVAETLMPGGVNSPVRAFKSVDTPAIFMDHGKGSKIYDIDGNEYIDYVLSWGPLILGHRDPQVISHLHEAIDKGTSFGASTLLENKLAQLVIDRVPSIEKVRMVSSGTEATLDTLRLARGYTGRNKIVKFEGCYHGHSDSLLIKAGSGVATLGLPDSPGVPEGIAKNTITVPYNDLDALKIAFEKFGDDIAGVIVEPVAGNMGVIPPIEGFLQGLRDITTEYGALLIFDEVMTGFRVGYHCAQGYFGVTPDLTCLGKVIGGGLPVGAFGGKKEIMDQIAPLGNIYQAGTLSGNPLAMTSGYETLSQLAPETYEYFNMLGDILEDGLKRVFAKHNVPITVNRAGSMIGYFLNEGPVTNFEQANKSDLKLFAEMYREMAKEGVFLPPSQFEGTFLSTAHTKEDIEKTIQAFDTALSRIVK.

Lysine 267 carries the post-translational modification N6-(pyridoxal phosphate)lysine.

Belongs to the class-III pyridoxal-phosphate-dependent aminotransferase family. HemL subfamily. In terms of assembly, homodimer. The cofactor is pyridoxal 5'-phosphate.

The protein resides in the cytoplasm. It catalyses the reaction (S)-4-amino-5-oxopentanoate = 5-aminolevulinate. The protein operates within porphyrin-containing compound metabolism; protoporphyrin-IX biosynthesis; 5-aminolevulinate from L-glutamyl-tRNA(Glu): step 2/2. In Staphylococcus aureus (strain bovine RF122 / ET3-1), this protein is Glutamate-1-semialdehyde 2,1-aminomutase 1.